A 326-amino-acid polypeptide reads, in one-letter code: tRNA-modifying protein YgfZ (326 aa).

Tryptophan 27 and tryptophan 189 together coordinate folate.

The protein belongs to the tRNA-modifying YgfZ family.

The protein localises to the cytoplasm. Functionally, folate-binding protein involved in regulating the level of ATP-DnaA and in the modification of some tRNAs. It is probably a key factor in regulatory networks that act via tRNA modification, such as initiation of chromosomal replication. This Shigella boydii serotype 18 (strain CDC 3083-94 / BS512) protein is tRNA-modifying protein YgfZ.